The sequence spans 2473 residues: Neurogenic locus notch homolog protein 2 (2473 aa).

The signal sequence occupies residues 1-25; the sequence is MPALRPAALRALLWLWLCGAGPAHA. EGF-like domains lie at 26-63, 64-102, 105-143, and 144-180; these read LQCR…EYCQ, HRDP…EDCQ, TSHP…KQCQ, and WTDA…QKCE. Residues 26-1679 are Extracellular-facing; the sequence is LQCRGGQEPC…SELESPRNAQ (1654 aa). Cystine bridges form between Cys-28-Cys-41, Cys-35-Cys-51, Cys-53-Cys-62, Cys-68-Cys-79, Cys-73-Cys-90, Cys-92-Cys-101, Cys-109-Cys-121, Cys-115-Cys-131, Cys-133-Cys-142, Cys-148-Cys-159, Cys-153-Cys-168, Cys-170-Cys-179, Cys-186-Cys-198, Cys-192-Cys-207, Cys-209-Cys-218, Cys-230-Cys-246, Cys-248-Cys-257, Cys-264-Cys-275, Cys-269-Cys-284, Cys-286-Cys-295, Cys-302-Cys-315, Cys-309-Cys-324, Cys-326-Cys-335, Cys-342-Cys-353, Cys-347-Cys-362, Cys-364-Cys-373, Cys-379-Cys-390, Cys-384-Cys-401, Cys-403-Cys-412, Cys-419-Cys-433, Cys-427-Cys-442, Cys-444-Cys-453, Cys-460-Cys-471, Cys-465-Cys-480, Cys-482-Cys-491, Cys-498-Cys-509, Cys-503-Cys-518, Cys-520-Cys-529, Cys-536-Cys-547, Cys-541-Cys-556, Cys-558-Cys-567, Cys-574-Cys-584, Cys-579-Cys-593, Cys-595-Cys-604, Cys-611-Cys-622, Cys-616-Cys-631, Cys-633-Cys-642, Cys-649-Cys-659, Cys-654-Cys-668, Cys-670-Cys-679, Cys-686-Cys-697, Cys-691-Cys-706, Cys-708-Cys-717, Cys-724-Cys-734, Cys-729-Cys-743, Cys-745-Cys-754, Cys-761-Cys-772, Cys-766-Cys-781, Cys-783-Cys-792, Cys-799-Cys-810, Cys-804-Cys-819, Cys-821-Cys-830, Cys-837-Cys-848, Cys-842-Cys-859, Cys-861-Cys-870, Cys-877-Cys-888, Cys-882-Cys-897, Cys-899-Cys-908, Cys-915-Cys-926, Cys-920-Cys-935, Cys-937-Cys-946, Cys-953-Cys-964, Cys-958-Cys-973, Cys-975-Cys-984, Cys-991-Cys-1002, Cys-996-Cys-1011, Cys-1013-Cys-1022, Cys-1029-Cys-1040, Cys-1034-Cys-1049, Cys-1051-Cys-1060, Cys-1067-Cys-1078, Cys-1072-Cys-1087, and Cys-1089-Cys-1098. An N-linked (GlcNAc...) asparagine glycan is attached at Asn-46. N-linked (GlcNAc...) asparagine glycosylation is present at Asn-155. An EGF-like 5; calcium-binding domain is found at 182–219; that stretch reads DINECDIPGRCQHGGTCLNLPGSYRCQCPQGFTGQHCD. Residues 221–258 form the EGF-like 6; incomplete domain; that stretch reads PYVPCAPSPCVNGGTCRQTGDFTFECNCLPGFEGSTCE. Positions 260 to 296 constitute an EGF-like 7; calcium-binding domain; that stretch reads NIDDCPNHKCQNGGVCVDGVNTYNCRCPPQWTGQFCT. Positions 298 to 336 constitute an EGF-like 8; calcium-binding domain; it reads DVDECLLQPNACQNGGTCTNRNGGYGCVCVNGWSGDDCS. The region spanning 338-374 is the EGF-like 9; calcium-binding domain; that stretch reads NIDDCAYASCTPGSTCIDRVASFSCLCPEGKAGLLCH. The EGF-like 10 domain occupies 375–413; sequence LDDACISNPCHKGALCDTNPLNGQYICTCPQGYKGADCT. Positions 415–454 constitute an EGF-like 11; calcium-binding domain; that stretch reads DVDECAMANSNPCEHAGKCVNTDGAFHCECLKGYAGPRCE. Residues 456 to 492 enclose the EGF-like 12; calcium-binding domain; the sequence is DINECHSDPCQNDATCLDKIGGFTCLCMPGFKGVHCE. The EGF-like 13; calcium-binding domain occupies 494-530; that stretch reads EVNECQSNPCVNNGQCVDKVNRFQCLCPPGFTGPVCQ. Residues 532–568 enclose the EGF-like 14; calcium-binding domain; sequence DIDDCSSTPCLNGAKCIDHPNGYECQCATGFTGILCD. Positions 570–605 constitute an EGF-like 15; calcium-binding domain; that stretch reads NIDNCDPDPCHHGQCQDGIDSYTCICNPGYMGAICS. Residues 607 to 643 enclose the EGF-like 16; calcium-binding domain; that stretch reads QIDECYSSPCLNDGRCIDLVNGYQCNCQPGTSGLNCE. Ser-613 is a glycosylation site (O-linked (Glc...) serine; alternate). The O-linked (Xyl...) serine; alternate glycan is linked to Ser-613. Positions 645-680 constitute an EGF-like 17; calcium-binding domain; it reads NFDDCASNPCMHGVCVDGINRYSCVCSPGFTGQRCN. The region spanning 682–718 is the EGF-like 18; calcium-binding domain; that stretch reads DIDECASNPCRKGATCINDVNGFRCICPEGPHHPSCY. Residues 720 to 755 enclose the EGF-like 19 domain; sequence QVNECLSNPCIHGNCTGGLSGYKCLCDAGWVGVNCE. Asn-733 carries N-linked (GlcNAc...) asparagine glycosylation. Positions 757-793 constitute an EGF-like 20; calcium-binding domain; it reads DKNECLSNPCQNGGTCNNLVNGYRCTCKKGFKGYNCQ. In terms of domain architecture, EGF-like 21; calcium-binding spans 795–831; sequence NIDECASNPCLNQGTCFDDVSGYTCHCMLPYTGKNCQ. The region spanning 833-871 is the EGF-like 22 domain; it reads VLAPCSPNPCENAAVCKEAPNFESFSCLCAPGWQGKRCT. One can recognise an EGF-like 23; calcium-binding domain in the interval 873–909; it reads DVDECISKPCMNNGVCHNTQGSYVCECPPGFSGMDCE. The EGF-like 24; calcium-binding domain maps to 911–947; that stretch reads DINDCLANPCQNGGSCVDHVNTFSCQCHPGFIGDKCQ. Positions 949–985 constitute an EGF-like 25; calcium-binding domain; that stretch reads DMNECLSEPCKNGGTCSDYVNSYTCTCPAGFHGVHCE. Positions 987–1023 constitute an EGF-like 26; calcium-binding domain; sequence NIDECTESSCFNGGTCVDGINSFSCLCPVGFTGPFCL. An EGF-like 27; calcium-binding domain is found at 1025 to 1061; sequence DINECSSNPCLNAGTCVDGLGTYRCICPLGYTGKNCQ. EGF-like domains lie at 1063 to 1099 and 1101 to 1147; these read LVNL…AYCD and LNVS…SYCE. Residue Asn-1102 is glycosylated (N-linked (GlcNAc...) asparagine). 24 cysteine pairs are disulfide-bonded: Cys-1105–Cys-1126, Cys-1120–Cys-1135, Cys-1137–Cys-1146, Cys-1153–Cys-1164, Cys-1158–Cys-1173, Cys-1175–Cys-1184, Cys-1191–Cys-1202, Cys-1196–Cys-1211, Cys-1213–Cys-1222, Cys-1229–Cys-1241, Cys-1235–Cys-1250, Cys-1252–Cys-1261, Cys-1268–Cys-1281, Cys-1273–Cys-1290, Cys-1292–Cys-1301, Cys-1308–Cys-1319, Cys-1313–Cys-1331, Cys-1333–Cys-1346, Cys-1378–Cys-1389, Cys-1383–Cys-1400, Cys-1402–Cys-1411, Cys-1425–Cys-1448, Cys-1430–Cys-1443, and Cys-1439–Cys-1455. An EGF-like 30; calcium-binding domain is found at 1149 to 1185; it reads QLDECASNPCQHGATCNDFIGGYRCECVPGYQGVNCE. In terms of domain architecture, EGF-like 31; calcium-binding spans 1187-1223; that stretch reads EVDECQNQPCQNGGTCIDLVNHFKCSCPPGTRGLLCE. The 38-residue stretch at 1225–1262 folds into the EGF-like 32; calcium-binding domain; sequence NIDECAGGPHCLNGGQCVDRIGGYTCRCLPGFAGERCE. EGF-like domains are found at residues 1264–1302, 1304–1343, and 1375–1412; these read DINE…RHCE, FLDV…ARCQ, and ESGC…SHCE. LNR repeat units lie at residues 1425–1465, 1466–1502, and 1503–1544; these read CQSQ…PWAN, CTST…NSKT, and CKYD…NLAE. The tract at residues 1425 to 1679 is negative regulatory region (NRR); sequence CQSQYCADKA…SELESPRNAQ (255 aa). The N-linked (GlcNAc...) asparagine glycan is linked to Asn-1465. Cystine bridges form between Cys-1466-Cys-1489, Cys-1472-Cys-1484, Cys-1480-Cys-1496, Cys-1503-Cys-1527, Cys-1509-Cys-1522, Cys-1518-Cys-1534, and Cys-1634-Cys-1641. Residues 1680-1700 traverse the membrane as a helical segment; it reads LLYLLAVAVVIILFFILLGVI. Residues 1701–2473 are Cytoplasmic-facing; the sequence is MAKRKRKHGF…PPHSNMQVYA (773 aa). Thr-1718 is subject to Phosphothreonine. Residues 1755–1778 form a disordered region; the sequence is GTSEHWVDDEGPQPKKAKAEDEAL. At Ser-1780 the chain carries Phosphoserine. The residue at position 1803 (Thr-1803) is a Phosphothreonine. Ser-1805 carries the post-translational modification Phosphoserine. Thr-1809 carries the post-translational modification Phosphothreonine. ANK repeat units follow at residues 1828-1872, 1877-1906, 1910-1940, 1944-1973, 1977-2006, and 2010-2039; these read DGCT…SLQA, TGEM…DANA, MGRC…DLDA, DGTT…DVNA, HGKS…NRDM, and KEET…NRDI. Ser-1843 and Ser-1846 each carry phosphoserine. Phosphoserine occurs at positions 2071, 2079, and 2082. Thr-2098 bears the Phosphothreonine mark. 3 disordered regions span residues 2098-2117, 2122-2169, and 2382-2473; these read TPMG…PTSL, KEAK…TSSP, and VGKY…QVYA. Positions 2099-2108 are enriched in basic residues; sequence PMGKKARRPN. 2 stretches are compositionally biased toward polar residues: residues 2140 to 2151 and 2390 to 2400; these read VQLSESSVTLSP and SQHSYASSNAA. Residues 2419-2446 show a composition bias toward low complexity; sequence PSPESPDQWSSSSPHSASDWSDVTTSPT. A compositionally biased stretch (gly residues) spans 2447 to 2456; it reads PGGGGGGQRG.

Belongs to the NOTCH family. In terms of assembly, heterodimer of a C-terminal fragment N(TM) and an N-terminal fragment N(EC) which are probably linked by disulfide bonds. Interacts with MAML1, MAML2 and MAML3 which act as transcriptional coactivators for NOTCH2. Interacts with RELA/p65. Interacts with HIF1AN. Interacts (via ANK repeats) with TCIM, the interaction inhibits the nuclear translocation of NOTCH2 N2ICD. Interacts with CUL1, RBX1, SKP1 and FBXW7 that are SCF(FBXW7) E3 ubiquitin-protein ligase complex components. Interacts with MINAR1; this interaction increases MINAR1 stability and function. Interacts with MDK; this interaction mediates a nuclear accumulation of NOTCH2 and therefore activation of NOTCH2 signaling leading to interaction between HES1 and STAT3. Interacts with MINAR2. In terms of processing, synthesized in the endoplasmic reticulum as an inactive form which is proteolytically cleaved by a furin-like convertase in the trans-Golgi network before it reaches the plasma membrane to yield an active, ligand-accessible form. Cleavage results in a C-terminal fragment N(TM) and a N-terminal fragment N(EC). Following ligand binding, it is cleaved by TNF-alpha converting enzyme (TACE) to yield a membrane-associated intermediate fragment called notch extracellular truncation (NEXT). This fragment is then cleaved by presenilin dependent gamma-secretase to release a notch-derived peptide containing the intracellular domain (NICD) from the membrane. Hydroxylated by HIF1AN. Post-translationally, can be either O-glucosylated or O-xylosylated at Ser-613 by POGLUT1. In terms of processing, phosphorylated by GSK3. GSK3-mediated phosphorylation is necessary for NOTCH2 recognition by FBXW7, ubiquitination and degradation via the ubiquitin proteasome pathway. In terms of tissue distribution, expressed in the brain, liver, kidney, neuroepithelia, somites, optic vesicles and branchial arches, but not heart.

Its subcellular location is the cell membrane. The protein localises to the nucleus. The protein resides in the cytoplasm. Its function is as follows. Functions as a receptor for membrane-bound ligands Jagged-1 (JAG1), Jagged-2 (JAG2) and Delta-1 (DLL1) to regulate cell-fate determination. Upon ligand activation through the released notch intracellular domain (NICD) it forms a transcriptional activator complex with RBPJ/RBPSUH and activates genes of the enhancer of split locus. Affects the implementation of differentiation, proliferation and apoptotic programs. May play an essential role in postimplantation development, probably in some aspect of cell specification and/or differentiation. In collaboration with RELA/p65 enhances NFATc1 promoter activity and positively regulates RANKL-induced osteoclast differentiation. Positively regulates self-renewal of liver cancer cells. The protein is Neurogenic locus notch homolog protein 2 of Mus musculus (Mouse).